A 703-amino-acid chain; its full sequence is Protein STRUBBELIG-RECEPTOR FAMILY 8 (703 aa).

An N-terminal signal peptide occupies residues 1 to 27 (MAIGDRAMFTVLLLFIASISGFSVVRC). Residues 28–291 (VTDPSDVQAL…GKGLSGGVVT (264 aa)) lie on the Extracellular side of the membrane. LRR repeat units lie at residues 96–120 (LKSLRKLDVSGNSIHDTLPYQLPPN), 122–142 (TSLNLARNNLSGNLPYSISAM), 143–165 (GSLSYMNVSGNSLTMSIGDIFAD), 166–190 (HKSLATLDLSHNNFSGDLPSSLSTV), 192–212 (TLSVLYVQNNQLTGSIDVLSG), 213–233 (LPLKTLNVANNHFNGSIPKEL), and 234–256 (SSIQTLIYDGNSFDNVPASPQPE). Asn-120, Asn-130, Asn-149, and Asn-178 each carry an N-linked (GlcNAc...) asparagine glycan. Asn-226 is a glycosylation site (N-linked (GlcNAc...) asparagine). Positions 247-284 (DNVPASPQPERPGKKETPSGSKKPKIGSEEKSSDSGKG) are disordered. Residues 292–312 (GIVFGSLFVAGIIALVLYLCL) form a helical membrane-spanning segment. Residues 313-703 (HKKKRKVRGS…PEHEHVDISF (391 aa)) lie on the Cytoplasmic side of the membrane. The Protein kinase domain occupies 395 to 672 (FSQENIIGEG…SEVVQQLVRL (278 aa)). ATP is bound by residues 401–409 (IGEGSLGRV) and Lys-423.

This sequence belongs to the protein kinase superfamily. Ser/Thr protein kinase family. Expressed in seedlings, roots, stems, leaves, flowers and siliques.

It localises to the membrane. This chain is Protein STRUBBELIG-RECEPTOR FAMILY 8 (SRF8), found in Arabidopsis thaliana (Mouse-ear cress).